The sequence spans 1701 residues: Merozoite surface protein 1 (1701 aa).

The first 19 residues, 1–19, serve as a signal peptide directing secretion; that stretch reads MKIIFFLCSFLFFIINTQC. Residues 89-100 are compositionally biased toward gly residues; that stretch reads GSGGSVASGGSG. The interval 89 to 118 is disordered; the sequence is GSGGSVASGGSGNSRRTNPSDNSSDSNTKT. A compositionally biased stretch (low complexity) spans 101 to 116; the sequence is NSRRTNPSDNSSDSNT. N-linked (GlcNAc...) asparagine glycosylation is found at Asn-110 and Asn-239. Residues 322-344 form a disordered region; that stretch reads DAENPTTGSKPNPLPENKKKEVE. N-linked (GlcNAc...) asparagine glycans are attached at residues Asn-470, Asn-536, and Asn-607. The tract at residues 704–739 is disordered; the sequence is SETTEDGGHSTHTLSQSGETEVTEETEVTEETVGHT. A compositionally biased stretch (acidic residues) spans 724-733; sequence EVTEETEVTE. 7 N-linked (GlcNAc...) asparagine glycosylation sites follow: Asn-802, Asn-899, Asn-919, Asn-965, Asn-991, Asn-1089, and Asn-1196. Positions 889-927 are enriched in low complexity; the sequence is TGTSSTSSPGNTTVNTAQSATHSNSQNQQSNASSTNTQN. The disordered stretch occupies residues 889-936; that stretch reads TGTSSTSSPGNTTVNTAQSATHSNSQNQQSNASSTNTQNGVAVSSGPA. Disordered stretches follow at residues 1231 to 1259 and 1451 to 1472; these read PPQPDVTPSPLSVRVSGSSGSTKEETQIP and KEKFPSSPPTTPPSPAKTDEQK. Polar residues predominate over residues 1245–1259; it reads VSGSSGSTKEETQIP. Over residues 1456–1465 the composition is skewed to pro residues; that stretch reads SSPPTTPPSP. N-linked (GlcNAc...) asparagine glycosylation occurs at Asn-1588. EGF-like domains follow at residues 1592-1632 and 1633-1680; these read HQCV…VENP and NPTC…IFCS. 6 disulfides stabilise this stretch: Cys-1594–Cys-1605, Cys-1599–Cys-1615, Cys-1617–Cys-1628, Cys-1636–Cys-1649, Cys-1643–Cys-1663, and Cys-1665–Cys-1679. Ser-1680 carries GPI-anchor amidated serine lipidation. Positions 1681–1701 are cleaved as a propeptide — removed in mature form; the sequence is SSNFLGISFLLILMLILYSFI.

As to quaternary structure, forms a complex composed of subunits p83, p30, p38, and p42 which remain non-covalently associated; the complex is formed at the merozoite surface prior to egress from host erythrocytes. Forms a complex composed of processed MSP1 subunits, MSP6 subunit p36 and MSP7; the complex is formed at the merozoite surface prior to egress from host erythrocytes. Within the complex, interacts (via subunit p38) with MSP6 subunit p36 and (via subunits p83, p30 and p38) with MSP7 (via subunit p22). Forms a complex composed of MSP1, MSP6, DBLMSP1 and DBLMSP2. Within the complex, interacts (via subunit p38) with DBLMSP1 and DBLMSP2. Forms a complex composed of MSP1, and rhoptry proteins RhopH3, RAP1 and CLAG9/RhopH3. Within the complex, interacts (via subunits p42 and p19) with RhopH3 (via C-terminus). Forms a complex composed of MSP1, MSP6, MSP7, MSP9 and MSP3; within the complex, MSP6 and MSP9 mediate the binding to the host erythrocyte. Interacts (via subunits p19 and p42) with MSP9; the interaction is direct; MSP1 subunits p19 or p42, and MSP9 form a co-ligand complex that interacts with host SLC4A1/Band 3 protein. May interact with PFD6. Interacts with host spectrin. In terms of assembly, interacts with host glycophorin GYPA in a sialic acid-independent manner. Interacts with host proinflammatory cytokine S100P; the interaction blocks S100P inflammatory and chemotactic activities. As to quaternary structure, interacts with host SLC4A1/Band 3 (via 5ABC region) on the host erythrocyte surface in a sialic acid-independent manner. In terms of processing, the p190 precursor is cleaved by SUB1 prior to merozoite egress into 4 subunits p83, p30, p38, and p42 which remain non-covalently associated. SUB1-mediated proteolytic cleavage occurs in an orderly manner; the first cleavage occurs at the p30/p38 site, followed by cleavage at the p83/p30 site, in the 3D7 strain a second cleavage occurs at the N-terminus of p83, the last cleavage occurs at the p38/p42 site. The order of cleavage is essential for parasite viability. SUB1-mediated processing is essential for merozoite egress. In a second processing step during erythrocyte invasion, p42 is cleaved by SUB2 into p33 and p19; the latter remains attached to the merozoite surface via its GPI-anchor and is endocytosed during the subsequent ring stage.

The protein localises to the cell membrane. It localises to the secreted. It is found in the vacuole membrane. During the asexual blood stage, involved in merozoite egress from host erythrocytes possibly via its interaction with the host cytoskeleton protein spectrin resulting in the destabilization of the host cytoskeleton and thus leading to erythrocyte cell membrane rupture. Involved in the binding to host erythrocytes and is required for host erythrocyte invasion. In terms of biological role, by binding to host proinflammatory cytokine S100P may interfere with host immune responses. Its function is as follows. Involved in merozoite invasion of host erythrocytes. May play a role in the biogenesis and/or function of the food vacuole during the intraerythrocytic development. This Plasmodium falciparum (isolate FC27 / Papua New Guinea) protein is Merozoite surface protein 1.